A 334-amino-acid polypeptide reads, in one-letter code: NAD-dependent protein deacylase sirtuin-6 (334 aa).

An N-acetylserine modification is found at Ser-2. Residue Ser-10 is modified to Phosphoserine. One can recognise a Deacetylase sirtuin-type domain in the interval 27–272 (PEELERKVWE…CRLMKHLGLE (246 aa)). Lys-33 is modified (N6-acetyllysine). NAD(+) is bound by residues Ala-53, Thr-57, Phe-64, Arg-65, Trp-71, Gln-113, and His-133. Residue His-133 is the Proton acceptor of the active site. Residues Cys-141, Cys-144, and Cys-166 each contribute to the Zn(2+) site. Lys-170 is covalently cross-linked (Glycyl lysine isopeptide (Lys-Gly) (interchain with G-Cter in ubiquitin)). Cys-177 is a Zn(2+) binding site. Positions 214, 216, 240, 242, and 258 each coordinate NAD(+). The interval 312–334 (KSKPNSPILHRPPKRVKTEAAPS) is disordered.

This sequence belongs to the sirtuin family. Class IV subfamily. As to quaternary structure, homodimer; binds to nucleosomes and DNA ends as a homodimer. Interacts with RELA; interferes with RELA binding to target DNA. Interacts with SMARCA5; promoting recruitment of SMARCA5/SNF2H to double-strand breaks (DSBs) sites. Interacts with the mTORC2 complex; preventing the ability of SIRT6 to deacetylate FOXO1. Interacts with the CLOCK-BMAL1 complex; recruited by the CLOCK-BMAL1 complex to regulate expression of clock-controlled genes. Interacts with CSNK2A2; preventing CSNK2A2 localization to the nucleus. Zn(2+) serves as cofactor. Acetylated at Lys-33. Deacetylation at Lys-33 by SIRT1 promotes homomultimerization and binding to double-strand breaks (DSBs) sites. Post-translationally, phosphorylation at Ser-10 by MAPK8/JNK1 in response to oxidative stress stimulates the mono-ADP-ribosyltransferase activity on PARP1, leading to PARP1 recruitment to double-strand breaks (DSBs). In terms of processing, monoubiquitinated at Lys-170 by STUB1/CHIP, preventing its degradation by the proteasome. Sumoylated, leading to specifically decrease ability to deacetylate histone H3 at 'Lys-56' (H3K56ac). Highest levels are found in muscle, thymus, spleen, brain and heart (at protein level).

Its subcellular location is the nucleus. The protein resides in the chromosome. The protein localises to the telomere. It localises to the endoplasmic reticulum. The catalysed reaction is N(6)-acetyl-L-lysyl-[protein] + NAD(+) + H2O = 2''-O-acetyl-ADP-D-ribose + nicotinamide + L-lysyl-[protein]. It catalyses the reaction N(6)-tetradecanoyl-L-lysyl-[protein] + NAD(+) + H2O = 2''-O-tetradecanoyl-ADP-D-ribose + nicotinamide + L-lysyl-[protein]. It carries out the reaction N(6)-hexadecanoyl-L-lysyl-[protein] + NAD(+) + H2O = 2''-O-hexadecanoyl-ADP-D-ribose + nicotinamide + L-lysyl-[protein]. The enzyme catalyses L-lysyl-[protein] + NAD(+) = N(6)-(ADP-D-ribosyl)-L-lysyl-[protein] + nicotinamide + H(+). The catalysed reaction is L-arginyl-[protein] + NAD(+) = N(omega)-(ADP-D-ribosyl)-L-arginyl-[protein] + nicotinamide + H(+). Its activity is regulated as follows. Compared to the defatty-acylase activity, the protein deacetylase activity is weak in vitro, and requires activation. The histone deacetylase activity is strongly activated upon binding to nucleosomes and chromatin in vivo. Two molecules of SIRT6 associate with the acidic patch of one nucleosome, while the C-terminal disordered region of SIRT6 associates with nucleosomal DNA, leading to efficient histone deacetylation. The protein-lysine deacetylase activity is also activated by long-chain free fatty-acids. In terms of biological role, NAD-dependent protein deacetylase, deacylase and mono-ADP-ribosyltransferase that plays an essential role in DNA damage repair, telomere maintenance, metabolic homeostasis, inflammation, tumorigenesis and aging. Displays protein-lysine deacetylase or defatty-acylase (demyristoylase and depalmitoylase) activity, depending on the context. Acts as a key histone deacetylase by catalyzing deacetylation of histone H3 at 'Lys-9', 'Lys-18' and 'Lys-56' (H3K9ac, H3K18ac and H3K56ac, respectively), suppressing target gene expression of several transcription factors, including NF-kappa-B. Acts as an inhibitor of transcription elongation by mediating deacetylation of H3K9ac and H3K56ac, preventing release of NELFE from chromatin and causing transcriptional pausing. Involved in DNA repair by promoting double-strand break (DSB) repair: acts as a DSB sensor by recognizing and binding DSB sites, leading to (1) recruitment of DNA repair proteins, such as SMARCA5/SNF2H, and (2) deacetylation of histone H3K9ac and H3K56ac. SIRT6 participation to DSB repair is probably involved in extension of life span. Also promotes DNA repair by deacetylating non-histone proteins, such as DDB2 and p53/TP53. Specifically deacetylates H3K18ac at pericentric heterochromatin, thereby maintaining pericentric heterochromatin silencing at centromeres and protecting against genomic instability and cellular senescence. Involved in telomere maintenance by catalyzing deacetylation of histone H3 in telomeric chromatin, regulating telomere position effect and telomere movement in response to DNA damage. Required for embryonic stem cell differentiation by mediating histone deacetylation of H3K9ac. Plays a major role in metabolism by regulating processes such as glycolysis, gluconeogenesis, insulin secretion and lipid metabolism. Inhibits glycolysis via histone deacetylase activity and by acting as a corepressor of the transcription factor HIF1A, thereby controlling the expression of multiple glycolytic genes. Has tumor suppressor activity by repressing glycolysis, thereby inhibiting the Warburg effect. Also regulates glycolysis and tumorigenesis by mediating deacetylation and nuclear export of non-histone proteins, such as isoform M2 of PKM (PKM2). Acts as a negative regulator of gluconeogenesis by mediating deacetylation of non-histone proteins, such as FOXO1 and KAT2A/GCN5. Promotes beta-oxidation of fatty acids during fasting by catalyzing deacetylation of NCOA2, inducing coactivation of PPARA. Acts as a regulator of lipid catabolism in brown adipocytes, both by catalyzing deacetylation of histones and non-histone proteins, such as FOXO1. Also acts as a regulator of circadian rhythms, both by regulating expression of clock-controlled genes involved in lipid and carbohydrate metabolism, and by catalyzing deacetylation of PER2. The defatty-acylase activity is specifically involved in regulation of protein secretion. Has high activity toward long-chain fatty acyl groups and mediates protein-lysine demyristoylation and depalmitoylation of target proteins, such as RRAS2 and TNF, thereby regulating their secretion. Also acts as a mono-ADP-ribosyltransferase by mediating mono-ADP-ribosylation of PARP1, TRIM28/KAP1 or SMARCC2/BAF170. Mono-ADP-ribosyltransferase activity is involved in DNA repair, cellular senescence, repression of LINE-1 retrotransposon elements and regulation of transcription. This is NAD-dependent protein deacylase sirtuin-6 from Mus musculus (Mouse).